Here is an 87-residue protein sequence, read N- to C-terminus: Mu-theraphotoxin-Hs1a (87 aa).

Positions Met1–Ala24 are cleaved as a signal peptide. Positions Ser25–Arg52 are excised as a propeptide. 3 disulfides stabilise this stretch: Cys54–Cys67, Cys61–Cys72, and Cys66–Cys79.

Belongs to the neurotoxin 10 (Hwtx-1) family. 51 (Hntx-8) subfamily. Hntx-8 sub-subfamily. Expressed by the venom gland.

The protein resides in the secreted. Probable sodium channel pore blocker that dose-dependently inhibits voltage-gated sodium channels (VGSC) on DUM neurons in a way similar to tetrodotoxin. Has no effect on the kinetics of activation and inactivation. Seems not to interact with VGSC in an inactivated state. In vivo, reversibly paralyzes cockroaches, and can enhance the muscular contraction elicited by stimulating its nerve. The polypeptide is Mu-theraphotoxin-Hs1a (Cyriopagopus schmidti (Chinese bird spider)).